The chain runs to 268 residues: Interferon alpha/beta receptor 2 (268 aa).

Residues 1-16 (MGPWTLLLLHLPLVVS) form the signal peptide. Residues 17 to 223 (MLPAPTNVSI…TSPTAANTVP (207 aa)) lie on the Extracellular side of the membrane. 2 consecutive Fibronectin type-III domains span residues 18 to 114 (LPAP…LTDT) and 115 to 217 (LLGP…TSPT). Cystine bridges form between Cys-65–Cys-74 and Cys-191–Cys-211. A helical membrane pass occupies residues 224–244 (VVLSVLCAFSLLVVLLCGIVV). Over 245–268 (YSGRLLCMHKPLPKTLSSVPLCGG) the chain is Cytoplasmic.

The protein belongs to the type II cytokine receptor family. As to quaternary structure, heterodimer with IFNAR1; forming the receptor for type I interferon.

The protein localises to the cell membrane. The protein resides in the cytoplasm. Functionally, together with IFNAR1, forms the heterodimeric receptor for type I interferons (including interferons alpha, beta, epsilon, omega and kappa). Type I interferon binding activates the JAK-STAT signaling cascade, resulting in transcriptional activation or repression of interferon-regulated genes that encode the effectors of the interferon response. Mechanistically, type I interferon-binding brings the IFNAR1 and IFNAR2 subunits into close proximity with one another, driving their associated Janus kinases (JAKs) (TYK2 bound to IFNAR1 and JAK1 bound to IFNAR2) to cross-phosphorylate one another. The activated kinases phosphorylate specific tyrosine residues on the intracellular domains of IFNAR1 and IFNAR2, forming docking sites for the STAT transcription factors (STAT1, STAT2 and STAT). STAT proteins are then phosphorylated by the JAKs, promoting their translocation into the nucleus to regulate expression of interferon-regulated genes. The protein is Interferon alpha/beta receptor 2 of Oncorhynchus mykiss (Rainbow trout).